The following is a 363-amino-acid chain: 24-methylenesterol C-methyltransferase 2 (363 aa).

A helical transmembrane segment spans residues 6 to 26 (MAWTAAGVGMALVYWFVWVMG).

Belongs to the class I-like SAM-binding methyltransferase superfamily. Erg6/SMT family.

It is found in the membrane. The enzyme catalyses 24-methylidenelophenol + S-adenosyl-L-methionine = (Z)-24-ethylidenelophenol + S-adenosyl-L-homocysteine + H(+). Its pathway is steroid biosynthesis; sterol biosynthesis. Functionally, catalyzes the methyl transfer from S-adenosyl-methionine to the methylene group of 24-methylene lophenol to form 24-ethylidene lophenol. The chain is 24-methylenesterol C-methyltransferase 2 (Smt2-1) from Oryza sativa subsp. japonica (Rice).